The sequence spans 747 residues: Protein tyrosine phosphatase domain-containing protein 1 (747 aa).

The segment at 1-36 (MAAGVLPQNEDPYSTLVNSSGHAAHMDENSGRPAPK) is disordered. The segment covering 11-21 (DPYSTLVNSSG) has biased composition (polar residues). Positions 82 to 253 (YSSWVTDNIL…LAPLRNIFSC (172 aa)) constitute a Tyrosine-protein phosphatase domain. Cys-190 acts as the Phosphocysteine intermediate in catalysis. A phosphoserine mark is found at Ser-392, Ser-394, and Ser-543. The segment at 549–570 (SSPKAQFPHGQETQDSTDLSEA) is disordered.

Belongs to the protein-tyrosine phosphatase family. Non-receptor class PTPDC1 subfamily.

In terms of biological role, may play roles in cilia formation and/or maintenance. The polypeptide is Protein tyrosine phosphatase domain-containing protein 1 (Ptpdc1) (Mus musculus (Mouse)).